We begin with the raw amino-acid sequence, 522 residues long: Ribose import ATP-binding protein RbsA 1 (522 aa).

ABC transporter domains are found at residues 8–243 and 249–496; these read LRIE…GRSI and RERP…VSTN. Residue 40–47 participates in ATP binding; the sequence is GENGAGKS. Residues 492-522 are disordered; it reads AVSTNQYKPDKSDKPDASAGKTDQKEAPRGH. The segment covering 499-522 has biased composition (basic and acidic residues); the sequence is KPDKSDKPDASAGKTDQKEAPRGH.

Belongs to the ABC transporter superfamily. Ribose importer (TC 3.A.1.2.1) family. In terms of assembly, the complex is composed of an ATP-binding protein (RbsA), two transmembrane proteins (RbsC) and a solute-binding protein (RbsB).

The protein localises to the cell membrane. It catalyses the reaction D-ribose(out) + ATP + H2O = D-ribose(in) + ADP + phosphate + H(+). Part of the ABC transporter complex RbsABC involved in ribose import. Responsible for energy coupling to the transport system. This chain is Ribose import ATP-binding protein RbsA 1, found in Streptomyces avermitilis (strain ATCC 31267 / DSM 46492 / JCM 5070 / NBRC 14893 / NCIMB 12804 / NRRL 8165 / MA-4680).